Reading from the N-terminus, the 369-residue chain is Phenylalanine--tRNA ligase alpha subunit (369 aa).

E269 is a binding site for Mg(2+).

The protein belongs to the class-II aminoacyl-tRNA synthetase family. Phe-tRNA synthetase alpha subunit type 1 subfamily. Tetramer of two alpha and two beta subunits. Requires Mg(2+) as cofactor.

The protein resides in the cytoplasm. It carries out the reaction tRNA(Phe) + L-phenylalanine + ATP = L-phenylalanyl-tRNA(Phe) + AMP + diphosphate + H(+). In Nitrobacter winogradskyi (strain ATCC 25391 / DSM 10237 / CIP 104748 / NCIMB 11846 / Nb-255), this protein is Phenylalanine--tRNA ligase alpha subunit.